The following is a 185-amino-acid chain: Ribosome-recycling factor (185 aa).

This sequence belongs to the RRF family.

Its subcellular location is the cytoplasm. Its function is as follows. Responsible for the release of ribosomes from messenger RNA at the termination of protein biosynthesis. May increase the efficiency of translation by recycling ribosomes from one round of translation to another. This Lactococcus lactis subsp. lactis (strain IL1403) (Streptococcus lactis) protein is Ribosome-recycling factor.